A 390-amino-acid chain; its full sequence is Spore development regulator vosA (390 aa).

A Velvet domain is found at 3 to 132; the sequence is NNTSSDFDLI…ADQGVKLRIR (130 aa). The span at 137–149 shows a compositional bias: basic and acidic residues; sequence TMLKRSTRPDEFH. Disordered regions lie at residues 137 to 191 and 265 to 390; these read TMLK…PVKR and QASA…GTPQ. The span at 165-175 shows a compositional bias: low complexity; it reads PPSSSYGGYPP. The short motif at 273–280 is the Nuclear localization signal element; the sequence is IPDPTGQS. Composition is skewed to polar residues over residues 350 to 364 and 371 to 390; these read QTPQ…SQMV and SSVT…GTPQ.

Belongs to the velvet family. VosA subfamily. As to quaternary structure, forms a heterodimeric complex with velB; the formation of the velB-vosA complex is light-dependent. Interacts with velA, velB and velC.

It is found in the nucleus. Component of the velB-VosA heterodimeric complex that plays a dual role in activating genes associated with spore maturation and repressing certain development-associated genes. The complex binds DNA through the DNA-binding domain of vosA that recognizes an 11-nucleotide consensus sequence 5'-CTGGCCGCGGC-3' consisting of two motifs in the promoters of key developmental regulatory genes. The chain is Spore development regulator vosA from Penicillium rubens (strain ATCC 28089 / DSM 1075 / NRRL 1951 / Wisconsin 54-1255) (Penicillium chrysogenum).